Here is a 293-residue protein sequence, read N- to C-terminus: Aquaporin-6 (293 aa).

At 1–22 (MEPGLCSRAYLLVGGLWTAISK) the chain is on the cytoplasmic side. The helical transmembrane segment at 23–43 (ALFAEFLATGLYVFFGVGSVL) threads the bilayer. Residues 44 to 51 (PWPVALPS) are Extracellular-facing. A helical transmembrane segment spans residues 52 to 70 (VLQIAITFNLATATAVQIS). Topologically, residues 71–75 (WKTSG) are cytoplasmic. An intramembrane region (discontinuously helical) is located at residues 76–85 (AHANPAVTLA). Residues 79 to 81 (NPA) carry the NPA 1 motif. Over 86-96 (YLVGSHISLPR) the chain is Cytoplasmic. A helical transmembrane segment spans residues 97–118 (AMAYIAAQLAGATAGAALLYGV). At 119–138 (TPGGIRETLGVNVVHNSTST) the chain is on the extracellular side. An N-linked (GlcNAc...) asparagine glycan is attached at asparagine 134. The chain crosses the membrane as a helical span at residues 139 to 159 (GQAVAVELVLTLQLVLCVFAS). Residues 160–165 (MDGRQT) are Cytoplasmic-facing. A helical membrane pass occupies residues 166 to 185 (LASPAAMIGTSVALGHLIGI). The Extracellular portion of the chain corresponds to 186–189 (YFTG). Residues 190–202 (CSMNPARSFGPAV) constitute an intramembrane region (discontinuously helical). The NPA 2 signature appears at 193–195 (NPA). The Extracellular segment spans residues 203 to 210 (IVGKFAVH). The helical transmembrane segment at 211–231 (WIFWVGPLTGAVLASLIYNFI) threads the bilayer. At 232-293 (LFPDTKTVAQ…RSFSFTLGLC (62 aa)) the chain is on the cytoplasmic side.

This sequence belongs to the MIP/aquaporin (TC 1.A.8) family. In terms of assembly, homotetramer; each monomer provides an independent solute pore.

Its subcellular location is the cytoplasmic vesicle membrane. It catalyses the reaction nitrate(in) = nitrate(out). The catalysed reaction is iodide(out) = iodide(in). The enzyme catalyses bromide(in) = bromide(out). It carries out the reaction chloride(in) = chloride(out). It catalyses the reaction Na(+)(in) = Na(+)(out). The catalysed reaction is H2O(in) = H2O(out). The enzyme catalyses CO2(out) = CO2(in). It carries out the reaction NH4(+)(in) = NH4(+)(out). In terms of biological role, aquaporins form homotetrameric transmembrane channels, with each monomer independently mediating water transport across the plasma membrane along its osmotic gradient. Unlike classical aquaporins, AQP6 is an intracellular channel with selective anion permeability, particularly for nitrate, and exhibits very low water permeability. It may also facilitate the transport of gases, such as CO2 and NH4(+), as demonstrated in vitro. The chain is Aquaporin-6 from Mus musculus (Mouse).